The chain runs to 420 residues: L-glutamine:2-deoxy-scyllo-inosose aminotransferase (420 aa).

N6-(pyridoxal phosphate)lysine is present on lysine 201.

It belongs to the DegT/DnrJ/EryC1 family. L-glutamine:2-deoxy-scyllo-inosose/scyllo-inosose aminotransferase subfamily. Requires pyridoxal 5'-phosphate as cofactor.

The enzyme catalyses 2-deoxy-L-scyllo-inosose + L-glutamine = 2-deoxy-scyllo-inosamine + 2-oxoglutaramate. It carries out the reaction 3-amino-2,3-dideoxy-scyllo-inosose + L-glutamine = 2-deoxystreptamine + 2-oxoglutaramate. It participates in metabolic intermediate biosynthesis; 2-deoxystreptamine biosynthesis; 2-deoxystreptamine from D-glucose 6-phosphate: step 2/4. Its pathway is antibiotic biosynthesis; gentamicin biosynthesis. In terms of biological role, catalyzes the PLP-dependent transamination of 2-deoxy-scyllo-inosose (2-DOI) to form 2-deoxy-scyllo-inosamine (2-DOIA) using L-glutamine as the amino donor. Also catalyzes the transamination of 3-amino-2,3-dideoxy-scyllo-inosose (keto-2-DOIA) into 2-deoxystreptamine (2-DOS). The polypeptide is L-glutamine:2-deoxy-scyllo-inosose aminotransferase (gntA) (Micromonospora echinospora (Micromonospora purpurea)).